Here is a 375-residue protein sequence, read N- to C-terminus: Probable pectin lyase C (375 aa).

Positions 1–20 (MKITSTIPAVLLGLAPLSAA) are cleaved as a signal peptide. Disulfide bonds link C83/C100 and C92/C220. R250 is an active-site residue. C317 and C325 form a disulfide bridge.

It belongs to the polysaccharide lyase 1 family.

It is found in the secreted. The catalysed reaction is Eliminative cleavage of (1-&gt;4)-alpha-D-galacturonan methyl ester to give oligosaccharides with 4-deoxy-6-O-methyl-alpha-D-galact-4-enuronosyl groups at their non-reducing ends.. In terms of biological role, pectinolytic enzymes consist of four classes of enzymes: pectin lyase, polygalacturonase, pectin methylesterase and rhamnogalacturonase. Among pectinolytic enzymes, pectin lyase is the most important in depolymerization of pectin, since it cleaves internal glycosidic bonds of highly methylated pectins. The chain is Probable pectin lyase C (pelC) from Aspergillus oryzae (strain ATCC 42149 / RIB 40) (Yellow koji mold).